Consider the following 352-residue polypeptide: Holliday junction branch migration complex subunit RuvB (352 aa).

A large ATPase domain (RuvB-L) region spans residues 4–185; sequence ADRLIAATGP…FGIVQRLEFY (182 aa). Residues Ile-24, Arg-25, Gly-66, Lys-69, Thr-70, Thr-71, 132–134, Arg-175, Tyr-185, and Arg-222 each bind ATP; that span reads EDF. Mg(2+) is bound at residue Thr-70. The interval 186–256 is small ATPAse domain (RuvB-S); the sequence is STADLATIVS…IADLALNLLD (71 aa). Positions 259–352 are head domain (RuvB-H); the sequence is ERGFDHQDRR…VDEFLDAVDD (94 aa). Residues Arg-295, Arg-314, and Arg-319 each contribute to the DNA site.

This sequence belongs to the RuvB family. Homohexamer. Forms an RuvA(8)-RuvB(12)-Holliday junction (HJ) complex. HJ DNA is sandwiched between 2 RuvA tetramers; dsDNA enters through RuvA and exits via RuvB. An RuvB hexamer assembles on each DNA strand where it exits the tetramer. Each RuvB hexamer is contacted by two RuvA subunits (via domain III) on 2 adjacent RuvB subunits; this complex drives branch migration. In the full resolvosome a probable DNA-RuvA(4)-RuvB(12)-RuvC(2) complex forms which resolves the HJ.

The protein resides in the cytoplasm. It carries out the reaction ATP + H2O = ADP + phosphate + H(+). Functionally, the RuvA-RuvB-RuvC complex processes Holliday junction (HJ) DNA during genetic recombination and DNA repair, while the RuvA-RuvB complex plays an important role in the rescue of blocked DNA replication forks via replication fork reversal (RFR). RuvA specifically binds to HJ cruciform DNA, conferring on it an open structure. The RuvB hexamer acts as an ATP-dependent pump, pulling dsDNA into and through the RuvAB complex. RuvB forms 2 homohexamers on either side of HJ DNA bound by 1 or 2 RuvA tetramers; 4 subunits per hexamer contact DNA at a time. Coordinated motions by a converter formed by DNA-disengaged RuvB subunits stimulates ATP hydrolysis and nucleotide exchange. Immobilization of the converter enables RuvB to convert the ATP-contained energy into a lever motion, pulling 2 nucleotides of DNA out of the RuvA tetramer per ATP hydrolyzed, thus driving DNA branch migration. The RuvB motors rotate together with the DNA substrate, which together with the progressing nucleotide cycle form the mechanistic basis for DNA recombination by continuous HJ branch migration. Branch migration allows RuvC to scan DNA until it finds its consensus sequence, where it cleaves and resolves cruciform DNA. In Pseudomonas fluorescens (strain ATCC BAA-477 / NRRL B-23932 / Pf-5), this protein is Holliday junction branch migration complex subunit RuvB.